The sequence spans 421 residues: Histidine--tRNA ligase (421 aa).

It belongs to the class-II aminoacyl-tRNA synthetase family. In terms of assembly, homodimer.

It is found in the cytoplasm. The catalysed reaction is tRNA(His) + L-histidine + ATP = L-histidyl-tRNA(His) + AMP + diphosphate + H(+). The polypeptide is Histidine--tRNA ligase (Thermus thermophilus (strain ATCC BAA-163 / DSM 7039 / HB27)).